Reading from the N-terminus, the 110-residue chain is UPF0339 protein YegP (110 aa).

2 repeat units span residues 10 to 58 (SSDN…RYEK) and 61 to 109 (ASNG…VKDN).

Belongs to the UPF0339 family. Duplicated subfamily.

This Escherichia coli (strain K12) protein is UPF0339 protein YegP (yegP).